The sequence spans 85 residues: Small ribosomal subunit protein uS17 (85 aa).

Belongs to the universal ribosomal protein uS17 family. Part of the 30S ribosomal subunit.

Its function is as follows. One of the primary rRNA binding proteins, it binds specifically to the 5'-end of 16S ribosomal RNA. The sequence is that of Small ribosomal subunit protein uS17 from Lachnospira eligens (strain ATCC 27750 / DSM 3376 / VPI C15-48 / C15-B4) (Eubacterium eligens).